A 542-amino-acid chain; its full sequence is MTQMRDLMIINANVRTVDARNSCAQAVLVSGGRIAIVGTETEVRGAAAPDAEVLDVSGKTVVPGFIDAHNHLSVAAFAPDSVDCSTPPLATLDEVLEVIERHCRNIPPGQWVRGINFHASHIREQRNPTRYELDEVAPNNPFFLIDASCHAGFANSAALDLVGIGAHTPEPWGGEIERDLSGKPTGTLLEAAANLLHSASWNDYAERDWDRAVELLHSKMNDYLAVGLTGVGDAMVTAKSAELYRRADAAGKMPFTLQQLHGGDHFFSMQDLGRSDTVDRIMEPESYLLRGGAMKIFVDRAYPSPAIDQIHDGCKTHVGANFYSKSEVHDLAVRASKLGINLAIHGMGNCAIDIVLDAYEAVRRQSNADTVLRLEHAFIAETGQGQRMADLGIDLVANPGLAFGWGEVFNMWRGENQEHLKLFPVRSMLDAGVRVSLASDHPCGTYSPAEIMWTAVARETMAGAPLEPDEAVTADEALRMYTINPAHASGRGSEEGSIEAGKRANLLVLDRDPVDCATGELRELQVLRTYVDGVLRYERTGS.

A propeptide spanning residues 1-2 (MT) is cleaved from the precursor.

Homodimer. Zn(2+) is required as a cofactor.

The catalysed reaction is N-benzylformamide + H2O = benzylamine + formate. With respect to regulation, completely inhibited by HgCl(2), CuCl, CuCl(2) and AgNO(3). Partially inhibited by ZnCl(2) and SnCl(2). Almost completely inhibited by the reducing reagent DTT. Partially inhibited by phenylhydrazine. Moderately inhibited by phenanthroline and 8-hydroxyquinoline. Completely inhibited by the thiol-specific inhibitors N-ethylmaleimide and p-chloromercuribenzoate. Not inhibited by the carbonyl-specific inhibitors aminoguanidine and semicarbazide, the chelating agents alpha,alpha'-dipyridyl, KCN, diethyldithiocarbamate and EDTA, or the oxidizing reagents and serine-modifying reagents such as H(2)O(2), ammonium persulfate, phenylmethanesulfonyl fluoride and diisopropyl fluorophosphates. Hydrolyzes N-substituted formamides, but not amides. N-benzylformamide is the preferred substrate, while N-butylformamide is hydrolyzed at a much lower rate. Has very low activity towards allylformamide, N-(2-cyclohex-1-enylethyl)formamide and N-(alpha-methylbenzyl)formamide. In Arthrobacter pascens, this protein is N-substituted formamide deformylase.